The chain runs to 93 residues: Small ribosomal subunit protein uS19c (93 aa).

It belongs to the universal ribosomal protein uS19 family.

It is found in the plastid. Its subcellular location is the chloroplast. In terms of biological role, protein S19 forms a complex with S13 that binds strongly to the 16S ribosomal RNA. This chain is Small ribosomal subunit protein uS19c (rps19-A), found in Zea mays (Maize).